A 330-amino-acid polypeptide reads, in one-letter code: MAQLPPKIPTMATAWPEFGGGHHHHAAHGHHHQRSPSMGAFLAAPLPPFPLPPPAPANGGAQQQQQQQQHQPSWVDEFLDFSATKRGAHRRSVSDSVAFLDPVSDDNAGVGAHDFDRLDDDQLMSMFSDDLQPPPPQQQPAAPAASASSPSDHNSMNDEKQDKGETDEAQSECDGATPGQPASPATVDPKRVKRILANRQSAQRSRVRKLQYISELERSVTSLQTEVSALSPRVAFLDHQRSLLTLGNSHLKQRIAALAQDKIFKDGGTEEGDREAAANLPPAKPQERGIPTGGRGPGPRPRQCRPDRQRGGRRGRAMPALVIGRDPDAL.

The segment at 1-207 (MAQLPPKIPT…NRQSAQRSRV (207 aa)) is disordered. The span at 21–34 (GHHHHAAHGHHHQR) shows a compositional bias: basic residues. Positions 45-56 (PLPPFPLPPPAP) are enriched in pro residues. 2 stretches are compositionally biased toward low complexity: residues 57-72 (ANGGAQQQQQQQQHQP) and 139-151 (QPAAPAASASSPS). Basic and acidic residues predominate over residues 155 to 166 (SMNDEKQDKGET). The region spanning 188 to 244 (DPKRVKRILANRQSAQRSRVRKLQYISELERSVTSLQTEVSALSPRVAFLDHQRSLL) is the bZIP domain. Positions 190–209 (KRVKRILANRQSAQRSRVRK) are basic motif. Residues 216–244 (LERSVTSLQTEVSALSPRVAFLDHQRSLL) form a leucine-zipper region. A disordered region spans residues 267 to 330 (GGTEEGDREA…LVIGRDPDAL (64 aa)).

As to expression, expressed in roots, shoots and panicles.

It is found in the nucleus. Transcription regulator. This Oryza sativa subsp. japonica (Rice) protein is Basic leucine zipper 2 (BZIP02).